Reading from the N-terminus, the 70-residue chain is Peptide Hp1035 (70 aa).

An N-terminal signal peptide occupies residues 1-23 (MKTQFVILLVALVLFQMFAQSEA). F36 carries the phenylalanine amide modification. The propeptide occupies 40-70 (GLQDLDMDDLDQLFDGEISQADINFLNQLMR).

The protein belongs to the non-disulfide-bridged peptide (NDBP) superfamily. Short antimicrobial peptide (group 4) family. As to expression, expressed by the venom gland.

The protein localises to the secreted. Its subcellular location is the target cell membrane. In terms of biological role, amphipathic peptide with antimicrobial activity. This is Peptide Hp1035 from Heterometrus petersii (Asian forest scorpion).